The sequence spans 195 residues: uncharacterized protein (195 aa).

Residues 1–11 (MDYIVSPTSSE) are compositionally biased toward polar residues. Residues 1–118 (MDYIVSPTSS…LDTEGGFVLS (118 aa)) form a disordered region. The span at 35-46 (SPEDITDSDEQN) shows a compositional bias: acidic residues. A compositionally biased stretch (low complexity) spans 47 to 63 (DTTTTTSEMSSTSSVPS). The segment covering 82 to 93 (SDSKLIFDSDNK) has biased composition (basic and acidic residues). Positions 94–110 (DQDDEDDEDDEELEGLD) are enriched in acidic residues.

This is an uncharacterized protein from Acanthamoeba polyphaga mimivirus (APMV).